Consider the following 296-residue polypeptide: 4-hydroxybenzoate octaprenyltransferase (296 aa).

8 helical membrane-spanning segments follow: residues 28–48 (IGTL…SDGI), 51–71 (LAVL…GCVI), 102–122 (LLLT…LNHL), 143–163 (FFPI…PMAF), 174–194 (AWIL…VYAM), 212–232 (FGRY…LLMA), 233–253 (VLGA…IVLL), and 274–294 (FLAN…HTFF).

This sequence belongs to the UbiA prenyltransferase family. Mg(2+) serves as cofactor.

Its subcellular location is the cell inner membrane. It catalyses the reaction all-trans-octaprenyl diphosphate + 4-hydroxybenzoate = 4-hydroxy-3-(all-trans-octaprenyl)benzoate + diphosphate. It participates in cofactor biosynthesis; ubiquinone biosynthesis. Its function is as follows. Catalyzes the prenylation of para-hydroxybenzoate (PHB) with an all-trans polyprenyl group. Mediates the second step in the final reaction sequence of ubiquinone-8 (UQ-8) biosynthesis, which is the condensation of the polyisoprenoid side chain with PHB, generating the first membrane-bound Q intermediate 3-octaprenyl-4-hydroxybenzoate. The chain is 4-hydroxybenzoate octaprenyltransferase from Neisseria gonorrhoeae (strain ATCC 700825 / FA 1090).